We begin with the raw amino-acid sequence, 579 residues long: MKAFVSQALQGALQQLHAQGRIPGIPATLELDRPKQVEHGHLASNVALLLAKAVGRKPRDIADDIVAALPASDWIARTEIAGPGFINFFLQPAAFHAVIHRVRTEKEHFGANRNGAGQRLQMEFVSANPTGPLHVGHGRGAAYGASLANILRFNGFDIFCEYYVNDAGRQMDILAASVYLRYLEADKALPWPFPENGYRGDYVREIAAHLREQVGDRLRHAAVGLPNLPQMSDGDIAIDTLIAHLKQSLGEDYRTLHSAGLDEILADIRDDLEGFGVHYERWYSEGSLMDTGAVDSAVAALEKAGHCYTQEGALWFRATAFDDDKDRVLRRDNGAYTYFASDVAYHAEKFARGFTHVIDMWGADHHGYVPRVKAALRALGLDDQQLEVVLVQFAILYRGTEKISMSTRAGEFVTLRELREEVGNDAARFFYVLRRADQHLDFDLELAKKHSEENPVFYIQYAHARVYSLLRQSVEKGLSLPPADGVGLEILQESREIALADALWRFPEVVATAARDREPHQIAFYLRELAAAFHTYYNSTRILVEETPLRHARLTLCLAVAQSIANGLRLLGVSAPEQM.

The 'HIGH' region signature appears at Ala127–His137.

The protein belongs to the class-I aminoacyl-tRNA synthetase family. In terms of assembly, monomer.

Its subcellular location is the cytoplasm. The enzyme catalyses tRNA(Arg) + L-arginine + ATP = L-arginyl-tRNA(Arg) + AMP + diphosphate. The protein is Arginine--tRNA ligase of Acidithiobacillus ferrooxidans (strain ATCC 23270 / DSM 14882 / CIP 104768 / NCIMB 8455) (Ferrobacillus ferrooxidans (strain ATCC 23270)).